Consider the following 58-residue polypeptide: UPF0391 membrane protein GM21_0108 (58 aa).

2 helical membrane passes run 4 to 24 and 33 to 53; these read WALI…GGIA and VLFY…LLAG.

The protein belongs to the UPF0391 family.

The protein localises to the cell membrane. The protein is UPF0391 membrane protein GM21_0108 of Geobacter sp. (strain M21).